The following is a 251-amino-acid chain: MRKPIIAGNWKMNKTLSEAVSFVEEVKGQIPAASAVDAVVCSPALFLERLVAATEGTDLQVGAQNMHFEKNGAFTGEISPVALSDLKVGYVVLGHSERREMFAETDESVNKKTLAAFEHGLTPIVCCGETLEERESGKTFDLVAGQVTKALAGLTEEQVKATVIAYEPIWAIGTGKSSSSADANEVCAHIRKVVAEAVSPEAAEAVRIQYGGSVKPENIKEYMAQSDIDGALVGGASLEPASFLGLLGAVK.

9–11 is a substrate binding site; sequence NWK. Catalysis depends on histidine 95, which acts as the Electrophile. The active-site Proton acceptor is the glutamate 167. Substrate is bound by residues glycine 173, serine 213, and 234 to 235; that span reads GG. Serine 213 carries the post-translational modification Phosphoserine.

It belongs to the triosephosphate isomerase family. In terms of assembly, homodimer.

The protein resides in the cytoplasm. The enzyme catalyses D-glyceraldehyde 3-phosphate = dihydroxyacetone phosphate. Its pathway is carbohydrate biosynthesis; gluconeogenesis. The protein operates within carbohydrate degradation; glycolysis; D-glyceraldehyde 3-phosphate from glycerone phosphate: step 1/1. Involved in the gluconeogenesis. Catalyzes stereospecifically the conversion of dihydroxyacetone phosphate (DHAP) to D-glyceraldehyde-3-phosphate (G3P). The sequence is that of Triosephosphate isomerase from Bacillus cereus (strain G9842).